Reading from the N-terminus, the 1253-residue chain is Cytoplasmic FMR1-interacting protein 1 homolog (1253 aa).

It belongs to the CYFIP family.

It is found in the cytoplasm. It localises to the perinuclear region. Its subcellular location is the cell projection. The protein localises to the lamellipodium. The protein resides in the ruffle. It is found in the synapse. It localises to the synaptosome. In terms of biological role, involved in formation of membrane ruffles and lamellipodia protrusions and in axon outgrowth. Binds to F-actin but not to RNA. In Danio rerio (Zebrafish), this protein is Cytoplasmic FMR1-interacting protein 1 homolog.